The primary structure comprises 453 residues: MTTDTIVAQATAPGRGGVGIIRVSGKLASDVAHTLLGHLPKPRYADFCDFKAADGSVIDQGIALFFKGPNSFTGEDVLELQGHGGQVVMDMLIRAVLKVKGVRIARPGEFSEQAFMNDKLDLTQAEAIADLIDATSEQAAKSALHSLQGEFSTQVHTLVDKITNLRLYVEAAIDFPDEEVDFLSDGKIAAALYAIIDQLDEVQASAKQGSIIREGMKVVIAGRPNAGKSSLLNALAGKESAIVTDIAGTTRDVLREHIHLDGMPLHIIDTAGLRDTTDEVERIGIERAWSEIASADRVLFMVDGTDTAAVDPHEIWPDFIDRLPKAMGVTVVRNKADLTGEPLEATEEQGYSVYRISAKTGLGVDALKQHLKSLMGYQSNLEGGFIARRRHLEALEQASEHLQLGKVQLEVYLAGELLAEELRMAQQALSEITGEFTSDDLLGKIFSSFCIGK.

Residues Arg-22, Glu-79, and Lys-119 each coordinate (6S)-5-formyl-5,6,7,8-tetrahydrofolate. Positions 215–376 constitute a TrmE-type G domain; that stretch reads GMKVVIAGRP…LKQHLKSLMG (162 aa). Asn-225 contacts K(+). GTP contacts are provided by residues 225–230, 244–250, 269–272, and 334–337; these read NAGKSS, TDIAGTT, DTAG, and NKAD. Ser-229 serves as a coordination point for Mg(2+). Thr-244, Ile-246, and Thr-249 together coordinate K(+). A Mg(2+)-binding site is contributed by Thr-250. Lys-453 serves as a coordination point for (6S)-5-formyl-5,6,7,8-tetrahydrofolate.

Belongs to the TRAFAC class TrmE-Era-EngA-EngB-Septin-like GTPase superfamily. TrmE GTPase family. Homodimer. Heterotetramer of two MnmE and two MnmG subunits. K(+) is required as a cofactor.

The protein resides in the cytoplasm. Its function is as follows. Exhibits a very high intrinsic GTPase hydrolysis rate. Involved in the addition of a carboxymethylaminomethyl (cmnm) group at the wobble position (U34) of certain tRNAs, forming tRNA-cmnm(5)s(2)U34. The chain is tRNA modification GTPase MnmE from Shewanella amazonensis (strain ATCC BAA-1098 / SB2B).